Reading from the N-terminus, the 364-residue chain is Probable endopolygalacturonase B (364 aa).

A signal peptide spans 1-20 (MHFFQSSLVAATMGAALVAA). A propeptide spanning residues 21–29 (APAADLETR) is cleaved from the precursor. Cysteine 32 and cysteine 47 are joined by a disulfide. Asparagine 138 and asparagine 141 each carry an N-linked (GlcNAc...) asparagine glycan. PbH1 repeat units follow at residues 159 to 188 (SDHL…DVGS), 189 to 210 (STYI…AVNS), 211 to 231 (GEHI…SIGS), 240 to 261 (VNDV…RIKT), 269 to 291 (VTGV…VVQQ), and 303 to 324 (TNGV…TSSA). The Proton donor role is filled by aspartate 203. The cysteines at positions 205 and 221 are disulfide-linked. Histidine 225 is an active-site residue. A disulfide bridge links cysteine 331 with cysteine 336. Residue asparagine 338 is glycosylated (N-linked (GlcNAc...) asparagine). An intrachain disulfide couples cysteine 355 to cysteine 364.

Belongs to the glycosyl hydrolase 28 family.

It localises to the secreted. It carries out the reaction (1,4-alpha-D-galacturonosyl)n+m + H2O = (1,4-alpha-D-galacturonosyl)n + (1,4-alpha-D-galacturonosyl)m.. In terms of biological role, involved in maceration and soft-rotting of plant tissue. Hydrolyzes the 1,4-alpha glycosidic bonds of de-esterified pectate in the smooth region of the plant cell wall. This chain is Probable endopolygalacturonase B (pgaB), found in Aspergillus fumigatus (strain ATCC MYA-4609 / CBS 101355 / FGSC A1100 / Af293) (Neosartorya fumigata).